The sequence spans 621 residues: UvrABC system protein C (621 aa).

Residues 13–92 form the GIY-YIG domain; sequence NEPGVYLMKN…IKKYSPKYNI (80 aa). One can recognise a UVR domain in the interval 204 to 239; that stretch reads RSLLNKLKEEMQSASGNLEFEKAASLRDKMIAIENI.

Belongs to the UvrC family. Interacts with UvrB in an incision complex.

It localises to the cytoplasm. Its function is as follows. The UvrABC repair system catalyzes the recognition and processing of DNA lesions. UvrC both incises the 5' and 3' sides of the lesion. The N-terminal half is responsible for the 3' incision and the C-terminal half is responsible for the 5' incision. The polypeptide is UvrABC system protein C (Clostridium beijerinckii (strain ATCC 51743 / NCIMB 8052) (Clostridium acetobutylicum)).